Here is an 807-residue protein sequence, read N- to C-terminus: Glycerol-3-phosphate acyltransferase (807 aa).

The HXXXXD motif signature appears at Cys308–Met313.

Belongs to the GPAT/DAPAT family.

Its subcellular location is the cell inner membrane. The enzyme catalyses sn-glycerol 3-phosphate + an acyl-CoA = a 1-acyl-sn-glycero-3-phosphate + CoA. The protein operates within phospholipid metabolism; CDP-diacylglycerol biosynthesis; CDP-diacylglycerol from sn-glycerol 3-phosphate: step 1/3. The chain is Glycerol-3-phosphate acyltransferase from Shewanella halifaxensis (strain HAW-EB4).